The following is a 277-amino-acid chain: Digeranylgeranylglyceryl phosphate synthase (277 aa).

7 helical membrane passes run 16-36 (ILAGIVGILGALVAYEGIPDI), 84-104 (ALYYALLQYAIGSILAYFLNI), 107-127 (FVFATIAYFLTFLYGWKLKPL), 146-166 (GAIGVGRIGLAGYLAICAFLV), 200-220 (AIIAAIFGFLTVIASFLPVKV), 221-241 (GIGLGYAPIIIVDIIIIKASI), and 257-277 (LKIATFVAVISFLAGALTKGV).

The protein belongs to the UbiA prenyltransferase family. DGGGP synthase subfamily. Mg(2+) is required as a cofactor.

The protein localises to the cell membrane. The catalysed reaction is sn-3-O-(geranylgeranyl)glycerol 1-phosphate + (2E,6E,10E)-geranylgeranyl diphosphate = 2,3-bis-O-(geranylgeranyl)-sn-glycerol 1-phosphate + diphosphate. The protein operates within membrane lipid metabolism; glycerophospholipid metabolism. Functionally, prenyltransferase that catalyzes the transfer of the geranylgeranyl moiety of geranylgeranyl diphosphate (GGPP) to the C2 hydroxyl of (S)-3-O-geranylgeranylglyceryl phosphate (GGGP). This reaction is the second ether-bond-formation step in the biosynthesis of archaeal membrane lipids. In Pyrococcus furiosus (strain ATCC 43587 / DSM 3638 / JCM 8422 / Vc1), this protein is Digeranylgeranylglyceryl phosphate synthase.